A 205-amino-acid chain; its full sequence is Probable molybdenum cofactor guanylyltransferase (205 aa).

GTP is bound by residues 10–12, Lys22, Asp69, and Asp100; that span reads LAG. Mg(2+) is bound at residue Asp100.

Belongs to the MobA family. The cofactor is Mg(2+).

Its subcellular location is the cytoplasm. It carries out the reaction Mo-molybdopterin + GTP + H(+) = Mo-molybdopterin guanine dinucleotide + diphosphate. Its function is as follows. Transfers a GMP moiety from GTP to Mo-molybdopterin (Mo-MPT) cofactor (Moco or molybdenum cofactor) to form Mo-molybdopterin guanine dinucleotide (Mo-MGD) cofactor. The chain is Probable molybdenum cofactor guanylyltransferase from Natranaerobius thermophilus (strain ATCC BAA-1301 / DSM 18059 / JW/NM-WN-LF).